We begin with the raw amino-acid sequence, 397 residues long: Kappa-carrageenase (397 aa).

An N-terminal signal peptide occupies residues 1 to 25; the sequence is MKPISIVAFPIPAISMLLLSAVSQA. The region spanning 26 to 299 is the GH16 domain; the sequence is ASMQPPIAKP…YVRTWVKVGN (274 aa). A disulfide bridge connects residues C98 and C268. E163 functions as the Nucleophile in the catalytic mechanism. D165 is an active-site residue. E168 (proton donor) is an active-site residue. The region spanning 316-387 is the BIG2 domain; sequence AVNSVQLSAA…TITVKTKNKG (72 aa).

Belongs to the glycosyl hydrolase 16 family.

The protein resides in the periplasm. The enzyme catalyses Endohydrolysis of (1-&gt;4)-beta-D-linkages between D-galactose 4-sulfate and 3,6-anhydro-D-galactose in kappa-carrageenans.. The protein is Kappa-carrageenase (cgkA) of Pseudoalteromonas carrageenovora (Alteromonas carrageenovora).